The following is a 146-amino-acid chain: L-fucose mutarotase (146 aa).

Catalysis depends on H22, which acts as the Proton donor. Residues D30, R109, and 131 to 133 contribute to the substrate site; that span reads YGN.

It belongs to the RbsD / FucU family. FucU mutarotase subfamily. In terms of assembly, homodecamer.

Its subcellular location is the cytoplasm. The catalysed reaction is alpha-L-fucose = beta-L-fucose. It participates in carbohydrate metabolism; L-fucose metabolism. In terms of biological role, involved in the anomeric conversion of L-fucose. This Glaesserella parasuis serovar 5 (strain SH0165) (Haemophilus parasuis) protein is L-fucose mutarotase.